A 399-amino-acid chain; its full sequence is MDEGGGGEGGSVPEDLSLEEREELLDIRRRKKELIDDIERLKYEIAEVMTEIDNLTSVEESKTTQRNKQIAMGRKKFNMDPKKGIQFLIENDLLQSSPEDVAQFLYKGEGLNKTVIGDYLGERDDFNIKVLQAFVELHEFADLNLVQALRQFLWSFRLPGEAQKIDRMMEAFASRYCLCNPGVFQSTDTCYVLSFAIIMLNTSLHNHNVRDKPTAERFITMNRGINEGGDLPEELLRNLYESIKNEPFKIPEDDGNDLTHTFFNPDREGWLLKLGGRVKTWKRRWFILTDNCLYYFEYTTDKEPRGIIPLENLSIREVEDPRKPNCFELYNPSHKGQVIKACKTEADGRVVEGNHVVYRISAPSPEEKEEWMKSIKASISRDPFYDMLATRKRRIANKK.

Residues 14 to 61 (EDLSLEEREELLDIRRRKKELIDDIERLKYEIAEVMTEIDNLTSVEES) are a coiled coil. An SEC7 domain is found at 77-206 (FNMDPKKGIQ…IIMLNTSLHN (130 aa)). Residues 264–380 (NPDREGWLLK…WMKSIKASIS (117 aa)) form the PH domain. A 1,2-diacyl-sn-glycero-3-phospho-(1D-myo-inositol-3,4,5-trisphosphate) is bound by residues 273–280 (KLGGRVKT), Arg-284, Tyr-295, Arg-305, and Asn-354. Residues 391–399 (RKRRIANKK) are C-terminal autoinhibitory region.

Interacts with TAMALIN. Interacts with FRMD4A. Interacts with FRMD4B.

The protein localises to the cytoplasm. The protein resides in the cytosol. It localises to the cell membrane. It is found in the cell junction. Its subcellular location is the adherens junction. The protein localises to the tight junction. Functionally, promotes guanine-nucleotide exchange on ARF1. Promotes the activation of ARF factors through replacement of GDP with GTP. Plays a role in the epithelial polarization. The protein is Cytohesin-3 (Cyth3) of Mus musculus (Mouse).